The sequence spans 239 residues: Large ribosomal subunit protein uL2 (239 aa).

The segment at valine 200–lysine 239 is disordered. Residues proline 222–lysine 239 are compositionally biased toward basic residues.

Belongs to the universal ribosomal protein uL2 family. Part of the 50S ribosomal subunit. Forms a bridge to the 30S subunit in the 70S ribosome.

One of the primary rRNA binding proteins. Required for association of the 30S and 50S subunits to form the 70S ribosome, for tRNA binding and peptide bond formation. It has been suggested to have peptidyltransferase activity; this is somewhat controversial. Makes several contacts with the 16S rRNA in the 70S ribosome. The protein is Large ribosomal subunit protein uL2 of Thermococcus kodakarensis (strain ATCC BAA-918 / JCM 12380 / KOD1) (Pyrococcus kodakaraensis (strain KOD1)).